A 152-amino-acid chain; its full sequence is Transcriptional regulator MraZ (152 aa).

2 SpoVT-AbrB domains span residues 5–52 and 81–124; these read ASAI…PADE and AHEI…DEAQ.

This sequence belongs to the MraZ family. Forms oligomers.

Its subcellular location is the cytoplasm. The protein resides in the nucleoid. This Shewanella amazonensis (strain ATCC BAA-1098 / SB2B) protein is Transcriptional regulator MraZ.